Reading from the N-terminus, the 219-residue chain is 2-hydroxy-3-keto-5-methylthiopentenyl-1-phosphate phosphatase (219 aa).

The protein belongs to the HAD-like hydrolase superfamily. MtnX family.

The catalysed reaction is 2-hydroxy-5-methylsulfanyl-3-oxopent-1-enyl phosphate + H2O = 1,2-dihydroxy-5-(methylsulfanyl)pent-1-en-3-one + phosphate. The protein operates within amino-acid biosynthesis; L-methionine biosynthesis via salvage pathway; L-methionine from S-methyl-5-thio-alpha-D-ribose 1-phosphate: step 4/6. In terms of biological role, dephosphorylates 2-hydroxy-3-keto-5-methylthiopentenyl-1-phosphate (HK-MTPenyl-1-P) yielding 1,2-dihydroxy-3-keto-5-methylthiopentene (DHK-MTPene). The chain is 2-hydroxy-3-keto-5-methylthiopentenyl-1-phosphate phosphatase from Bacillus cytotoxicus (strain DSM 22905 / CIP 110041 / 391-98 / NVH 391-98).